The sequence spans 1012 residues: Isoleucine--tRNA ligase, mitochondrial (1012 aa).

A mitochondrion-targeting transit peptide spans 1-48 (MHWGLCPRGPGAAAVAAAGSFWGPARLPSRLGCLGMTRRLVVRSVAGA). Position 56 is an N6-succinyllysine (K56). At K74 the chain carries N6-acetyllysine; alternate. K74 carries the N6-succinyllysine; alternate modification. Positions 116–126 (PYANGDPHVGH) match the 'HIGH' region motif. Residue K194 is modified to N6-succinyllysine. At K233 the chain carries N6-acetyllysine. K241 carries the N6-acetyllysine; alternate modification. K241 bears the N6-succinyllysine; alternate mark. 2 positions are modified to N6-succinyllysine: K479 and K500. K664 and K667 together coordinate ATP. The 'KMSKS' region motif lies at 664 to 668 (KMSKS). An N6-acetyllysine modification is found at K725. K775 and K781 each carry N6-acetyllysine; alternate. K775 and K781 each carry N6-succinyllysine; alternate.

It belongs to the class-I aminoacyl-tRNA synthetase family.

The protein localises to the mitochondrion matrix. It catalyses the reaction tRNA(Ile) + L-isoleucine + ATP = L-isoleucyl-tRNA(Ile) + AMP + diphosphate. Its function is as follows. Aminoacyl-tRNA synthetase that catalyzes the specific attachment of isoleucine to its cognate tRNA (tRNA(Ile)). The chain is Isoleucine--tRNA ligase, mitochondrial from Mus musculus (Mouse).